The primary structure comprises 359 residues: 3-dehydroquinate synthase (359 aa).

Residues 106–110 (GVVGD), 130–131 (TT), K143, K152, and 170–173 (TLQT) each bind NAD(+). The Zn(2+) site is built by E185, H248, and H265.

This sequence belongs to the sugar phosphate cyclases superfamily. Dehydroquinate synthase family. The cofactor is Co(2+). Requires Zn(2+) as cofactor. NAD(+) serves as cofactor.

The protein resides in the cytoplasm. It carries out the reaction 7-phospho-2-dehydro-3-deoxy-D-arabino-heptonate = 3-dehydroquinate + phosphate. It participates in metabolic intermediate biosynthesis; chorismate biosynthesis; chorismate from D-erythrose 4-phosphate and phosphoenolpyruvate: step 2/7. Its function is as follows. Catalyzes the conversion of 3-deoxy-D-arabino-heptulosonate 7-phosphate (DAHP) to dehydroquinate (DHQ). This is 3-dehydroquinate synthase from Desulforamulus reducens (strain ATCC BAA-1160 / DSM 100696 / MI-1) (Desulfotomaculum reducens).